The primary structure comprises 496 residues: Apolipoprotein N-acyltransferase (496 aa).

6 helical membrane-spanning segments follow: residues 6-26, 50-70, 77-97, 114-134, 148-168, and 183-203; these read IICF…FFIP, FGYL…SIGV, FWWA…FFIS, LIFC…CTGL, ILIQ…VIYI, and LKIL…YGAM. Positions 220 to 464 constitute a CN hydrolase domain; it reads VQPSIPQTAK…QGLIPQKLTT (245 aa). Glu259 serves as the catalytic Proton acceptor. Residue Lys322 is part of the active site. Residue Cys372 is the Nucleophile of the active site. A helical membrane pass occupies residues 474-494; it reads FAMLLPIVFILLIHYLLSLIF.

It belongs to the CN hydrolase family. Apolipoprotein N-acyltransferase subfamily.

It localises to the cell inner membrane. The enzyme catalyses N-terminal S-1,2-diacyl-sn-glyceryl-L-cysteinyl-[lipoprotein] + a glycerophospholipid = N-acyl-S-1,2-diacyl-sn-glyceryl-L-cysteinyl-[lipoprotein] + a 2-acyl-sn-glycero-3-phospholipid + H(+). The protein operates within protein modification; lipoprotein biosynthesis (N-acyl transfer). Catalyzes the phospholipid dependent N-acylation of the N-terminal cysteine of apolipoprotein, the last step in lipoprotein maturation. In Rickettsia typhi (strain ATCC VR-144 / Wilmington), this protein is Apolipoprotein N-acyltransferase.